Here is a 94-residue protein sequence, read N- to C-terminus: MFVDDDSLIIYSTWPSTLSDSSGRVIVMPDNRSFTFKEGFKLDESIKSILLVNPSSIDLLKIRVYKHRIKWMGNIFVLFEQENIPPPFRLVNDK.

This sequence belongs to the orthopoxvirus OPG142 family. As to quaternary structure, part of a complex composed of the kinase OPG054, OPG092, OPG100, OPG114, OPG115, OPG142 and OPG157.

It is found in the host cytoplasm. The protein localises to the virion. Late protein which is a part of a large complex required for early virion morphogenesis. This complex participates in the formation of virosomes and the incorporation of virosomal contents into nascent immature virions. Required for the stability and kinase activity of OPG054. The polypeptide is Core protein OPG142 (OPG142) (Homo sapiens (Human)).